The sequence spans 297 residues: Mitochondrial nicotinamide adenine dinucleotide transporter SLC25A52 (297 aa).

3 Solcar repeats span residues V28–L108, P116–H200, and A209–F296. Transmembrane regions (helical) follow at residues Y34–I51, L85–L105, F118–L138, I179–E199, F215–V235, and L268–T289.

It belongs to the mitochondrial carrier (TC 2.A.29) family.

Its subcellular location is the mitochondrion inner membrane. The catalysed reaction is NAD(+)(in) = NAD(+)(out). In terms of biological role, mitochondrial membrane carrier protein that mediates the import of NAD(+) into mitochondria. Compared to SLC25A51, SLC25A52-mediated transport is not essential for the import of NAD(+) in mitochondria. The transport mechanism, uniport or antiport, its electrogenicity and substrate selectivity, remain to be elucidated. This Homo sapiens (Human) protein is Mitochondrial nicotinamide adenine dinucleotide transporter SLC25A52.